We begin with the raw amino-acid sequence, 132 residues long: Myelin P2 protein (132 aa).

Ser-2 carries the post-translational modification N-acetylserine. Residue Arg-107 participates in (9Z)-octadecenoate binding. Arg-107 lines the hexadecanoate pocket. Cys-118 and Cys-125 are joined by a disulfide. 127-129 (RIY) is a (9Z)-octadecenoate binding site. 127–129 (RIY) is a binding site for hexadecanoate.

The protein belongs to the calycin superfamily. Fatty-acid binding protein (FABP) family. Monomer.

It localises to the cytoplasm. Its function is as follows. May play a role in lipid transport protein in Schwann cells. May bind cholesterol. This Sus scrofa (Pig) protein is Myelin P2 protein.